The sequence spans 605 residues: MYFSSLCKFLPISEKEKIYLNIVKKRFCKSNIYYNNNNNNIINYNKRGLKFYPFCNNLKKNINFVNINNKKGINFHSINKERKMASEVPQVVSLDPTSIPIEYNTPIHDIKVQVYDIKGGCNVEEGLTIFLVNNPGKENGPVKISSKVNDKNVSEFLKDENMEKFNVKLGTSKHFYMFNDNKNSVAVGYVGCGSVADLSEADMKRVVLSLVTMLHDNKLSKLTVVFEINVDKNLFRFFLETLFYEYMTDERFKSTDKNVNMEYIKHLGVYINNADTYKEEVEKARVYYFGTYYASQLIAAPSNYCNPVSLSNAAVELAQKLNLEYKILGVKELEELKMGAYLSVGKGSMYPNKFIHLTYKSKGDVKKKIALVGKGITFDSGGYNLKAAPGSMIDLMKFDMSGCAAVLGCAYCVGTLKPENVEIHFLSAVCENMVSKNSYRPGDIITASNGKTIEVGNTDAEGRLTLADALVYAEKLGVDYIVDIATLTGAMLYSLGTSYAGVFGNNEELINKILNSSKTSNEPVWWLPIINEYRATLNSKYADINNISSSVKASSIVASLFLKEFVQNTAWAHIDIAGVSWNFKARKPKGFGVRLLTEFVLNDAL.

Positions 374, 379, and 386 each coordinate a peptide. Positions 374 and 379 each coordinate Zn(2+). Residues 384–401 form an L13 loop region; sequence NLKAAPGSMIDLMKFDMS. Lys386 is an active-site residue. Zn(2+) contacts are provided by Asp394, Met396, Asp399, Asp459, and Glu461. A peptide is bound by residues Asp399 and Asp459. Arg463 is an active-site residue.

This sequence belongs to the peptidase M17 family. In terms of assembly, homohexamer composed of dimer of trimers. Both the identity and concentration of metal ions available dictate the extent to which oligomerization occurs; Mn(2+) and Co(2+) induces oligomerization, whereas Mg(2+) has no effect, and Zn(2+) causes irreversible protein aggregation in vitro. Requires Zn(2+) as cofactor.

The protein localises to the cytoplasm. The catalysed reaction is Release of an N-terminal amino acid, Xaa-|-Yaa-, in which Xaa is preferably Leu, but may be other amino acids including Pro although not Arg or Lys, and Yaa may be Pro. Amino acid amides and methyl esters are also readily hydrolyzed, but rates on arylamides are exceedingly low.. The enzyme catalyses L-cysteinylglycine + H2O = L-cysteine + glycine. Oligomerization is required for catalytic activity and is metal-dependent. The type of metal that binds the 2 metal binding sites influences catalytic activity and substrate specificity. In vitro, activated by Co(2+), Mn(2+), Ni(2+), Mg(2+) and Zn(2+) with decreasing strength. Occupancy of the site 2 is essential and sufficient for activating the enzyme but occupation of the 2 sites is necessary for full catalytic activity. Inhibited by fungal metabolite bestatin. Inhibited by Phe-Naphthyl (PNAP). Aminopeptidase which preferentially cleaves leucine residues from the N-terminus of peptides. Also, has some activity towards tryptophan and methionine and to a lesser extent towards phenylalanine. Has very low activity or no activity towards the other amino acids. In addition, cleaves the Cys-Gly dipeptide, probably as part of the glutathione regulation pathway; cleavage only occurs in the presence of Mn(2+). During the asexual blood stage, plays a role in the final step of host hemoglobin catabolism, by cleaving hemoglobin-derived oligopeptides providing a source of amino acids for the parasite protein synthesis and for the maintenance of osmotic homeostasis. During the asexual blood stage, may also play a role during the ring-trophozoite transition. This chain is Leucine aminopeptidase, found in Plasmodium falciparum (isolate 3D7).